The sequence spans 364 residues: Fructose-bisphosphate aldolase, non-muscle type (364 aa).

Residues arginine 56 and lysine 147 each coordinate substrate. Lysine 230 (schiff-base intermediate with dihydroxyacetone-P) is an active-site residue.

Belongs to the class I fructose-bisphosphate aldolase family. As to quaternary structure, homotetramer. Expressed mainly in the liver and also in brain and other tissues, except for the heart muscle.

The catalysed reaction is beta-D-fructose 1,6-bisphosphate = D-glyceraldehyde 3-phosphate + dihydroxyacetone phosphate. It participates in carbohydrate degradation; glycolysis; D-glyceraldehyde 3-phosphate and glycerone phosphate from D-glucose: step 4/4. This chain is Fructose-bisphosphate aldolase, non-muscle type, found in Lethenteron camtschaticum (Japanese lamprey).